The chain runs to 438 residues: DEAD-box ATP-dependent RNA helicase CshB (438 aa).

Positions Thr-4 to Lys-32 match the Q motif motif. Positions Ile-35–Ala-208 constitute a Helicase ATP-binding domain. Ser-48–Thr-55 contacts ATP. The DEAD box motif lies at Asp-156–Asp-159. The 151-residue stretch at Leu-235–Arg-385 folds into the Helicase C-terminal domain. Positions Gly-380 to Lys-438 are disordered. Basic and acidic residues predominate over residues Thr-392–His-401. Basic residues-rich tracts occupy residues Arg-402–Lys-417 and Ile-425–Lys-438.

It belongs to the DEAD box helicase family. In terms of assembly, interacts with CspB when cells are transcriptionally active. May interact with RNA helicases CshA and DbpA (DeaD), may be a component of a possible RNA degradosome complex composed of rny, rnja, rnjb, pnp, pfkA and eno (although rnjA and rnjB's presence is unclear). Specifically interacts with pnp and rny.

The protein localises to the cytoplasm. It is found in the nucleoid. The enzyme catalyses ATP + H2O = ADP + phosphate + H(+). DEAD-box RNA helicase that plays a role in 70S ribosome assembly. May work in conjunction with the cold shock proteins to ensure proper initiation of transcription at low and optimal temperatures. In Bacillus subtilis (strain 168), this protein is DEAD-box ATP-dependent RNA helicase CshB.